We begin with the raw amino-acid sequence, 192 residues long: Imidazoleglycerol-phosphate dehydratase (192 aa).

It belongs to the imidazoleglycerol-phosphate dehydratase family.

It is found in the cytoplasm. It catalyses the reaction D-erythro-1-(imidazol-4-yl)glycerol 3-phosphate = 3-(imidazol-4-yl)-2-oxopropyl phosphate + H2O. The protein operates within amino-acid biosynthesis; L-histidine biosynthesis; L-histidine from 5-phospho-alpha-D-ribose 1-diphosphate: step 6/9. In Caldivirga maquilingensis (strain ATCC 700844 / DSM 13496 / JCM 10307 / IC-167), this protein is Imidazoleglycerol-phosphate dehydratase.